The sequence spans 539 residues: MSAEGSQSLAAPRGRPSHLLVPARTKTALALLYDEGLENAYDVRLKLTKEVLTIQKQDVVCIGGAPPGANHRTVTLRRQPVGGLGLSIKGGAEHGVPVVISKIFKDQAADQTEMLFIGDAVLQVNGINVENATHEEVVHLLRNAGDDVTITVEYLREAPSFLKLPLGSPGPSSDHSSRASSPLFDSGLHLNGHCSHTAPSSPSSPIANEPKYEKRWLDTLSVPLSMARISRYKAGTEKLRSSALEVLALDGASTGVLQFSTAQDCADWLRSISTNISDLTLQHMKMANKCCSPCDQVVHMGWVNERLQGADNSQNFRPKFLALRGSSFYIFGAPPVSTLDWGRAERAYNLCEVLFKVHKFWLSDNYWLQANLYLGLQDFDCEDPRSYCFSVLANHGKSHIFSVELGSELAVWEKAFQRATFMEVQRTGSKTYLCSWQGETLCFTVDFALGFTCFDGKTKNVLWRFKFSQLKGSSDDGKTRVKLLFQNLDTKQIETKELEFQDLTAVLHCIHSFIAAKVASLDPVFMDSQSMARRYLCSS.

The PDZ domain occupies 73–156 (TVTLRRQPVG…DVTITVEYLR (84 aa)). A PH domain is found at 296-421 (QVVHMGWVNE…WEKAFQRATF (126 aa)).

Belongs to the syntrophin family. As to quaternary structure, interacts with the dystrophin protein DMD and related proteins DTNA and DTNB.

It localises to the cell membrane. The protein resides in the sarcolemma. It is found in the cytoplasm. Its subcellular location is the cytoskeleton. Adapter protein that binds to and probably organizes the subcellular localization of a variety of proteins. May link various receptors to the actin cytoskeleton and the dystrophin glycoprotein complex. In Mus musculus (Mouse), this protein is Gamma-2-syntrophin (Sntg2).